Consider the following 247-residue polypeptide: Adenosylcobinamide-GDP ribazoletransferase (247 aa).

5 helical membrane passes run 34 to 54 (IVMFPLIGAILGGLSGLIFIL), 59 to 79 (CGIPLAALFCILALALLTGGF), 113 to 133 (GGLALIFVLLAKILVVSELAL), 138 to 158 (VLAALAAACAAGRGSAALLMY), and 194 to 214 (VLLPGMQGLAAIVITLAAIFI).

The protein belongs to the CobS family. It depends on Mg(2+) as a cofactor.

It localises to the cell inner membrane. The enzyme catalyses alpha-ribazole + adenosylcob(III)inamide-GDP = adenosylcob(III)alamin + GMP + H(+). The catalysed reaction is alpha-ribazole 5'-phosphate + adenosylcob(III)inamide-GDP = adenosylcob(III)alamin 5'-phosphate + GMP + H(+). It functions in the pathway cofactor biosynthesis; adenosylcobalamin biosynthesis; adenosylcobalamin from cob(II)yrinate a,c-diamide: step 7/7. In terms of biological role, joins adenosylcobinamide-GDP and alpha-ribazole to generate adenosylcobalamin (Ado-cobalamin). Also synthesizes adenosylcobalamin 5'-phosphate from adenosylcobinamide-GDP and alpha-ribazole 5'-phosphate. The protein is Adenosylcobinamide-GDP ribazoletransferase of Salmonella arizonae (strain ATCC BAA-731 / CDC346-86 / RSK2980).